A 432-amino-acid polypeptide reads, in one-letter code: Enolase (432 aa).

Gln-164 is a binding site for (2R)-2-phosphoglycerate. The Proton donor role is filled by Glu-206. Residues Asp-243, Glu-284, and Asp-311 each coordinate Mg(2+). (2R)-2-phosphoglycerate-binding residues include Lys-336, Arg-365, Ser-366, and Lys-387. Lys-336 acts as the Proton acceptor in catalysis.

The protein belongs to the enolase family. It depends on Mg(2+) as a cofactor.

It localises to the cytoplasm. The protein localises to the secreted. Its subcellular location is the cell surface. It carries out the reaction (2R)-2-phosphoglycerate = phosphoenolpyruvate + H2O. It functions in the pathway carbohydrate degradation; glycolysis; pyruvate from D-glyceraldehyde 3-phosphate: step 4/5. Catalyzes the reversible conversion of 2-phosphoglycerate (2-PG) into phosphoenolpyruvate (PEP). It is essential for the degradation of carbohydrates via glycolysis. This Synechococcus sp. (strain JA-3-3Ab) (Cyanobacteria bacterium Yellowstone A-Prime) protein is Enolase.